We begin with the raw amino-acid sequence, 540 residues long: Chaperonin GroEL (540 aa).

ATP contacts are provided by residues 29 to 32 (TLGP), 86 to 90 (DGTTT), glycine 413, and aspartate 495.

This sequence belongs to the chaperonin (HSP60) family. As to quaternary structure, forms a cylinder of 14 subunits composed of two heptameric rings stacked back-to-back. Interacts with the co-chaperonin GroES.

It is found in the cytoplasm. The catalysed reaction is ATP + H2O + a folded polypeptide = ADP + phosphate + an unfolded polypeptide.. Together with its co-chaperonin GroES, plays an essential role in assisting protein folding. The GroEL-GroES system forms a nano-cage that allows encapsulation of the non-native substrate proteins and provides a physical environment optimized to promote and accelerate protein folding. The chain is Chaperonin GroEL from Caldanaerobacter subterraneus subsp. tengcongensis (strain DSM 15242 / JCM 11007 / NBRC 100824 / MB4) (Thermoanaerobacter tengcongensis).